The chain runs to 383 residues: UPF0425 pyridoxal phosphate-dependent protein Msp_0916 (383 aa).

An N6-(pyridoxal phosphate)lysine modification is found at K207.

Belongs to the UPF0425 family. Requires pyridoxal 5'-phosphate as cofactor.

This chain is UPF0425 pyridoxal phosphate-dependent protein Msp_0916, found in Methanosphaera stadtmanae (strain ATCC 43021 / DSM 3091 / JCM 11832 / MCB-3).